The following is a 291-amino-acid chain: N-acetylmannosamine kinase (291 aa).

Residues 5 to 12 (AIDIGGTK) and 132 to 139 (GVGGGVVC) contribute to the ATP site. Residues His156, Cys166, Cys168, and Cys173 each coordinate Zn(2+).

It belongs to the ROK (NagC/XylR) family. NanK subfamily. Homodimer.

The enzyme catalyses an N-acyl-D-mannosamine + ATP = an N-acyl-D-mannosamine 6-phosphate + ADP + H(+). Its pathway is amino-sugar metabolism; N-acetylneuraminate degradation; D-fructose 6-phosphate from N-acetylneuraminate: step 2/5. Functionally, catalyzes the phosphorylation of N-acetylmannosamine (ManNAc) to ManNAc-6-P. This is N-acetylmannosamine kinase from Salmonella typhi.